Consider the following 282-residue polypeptide: Phosphatidylserine decarboxylase proenzyme (282 aa).

Active-site charge relay system; for autoendoproteolytic cleavage activity residues include Asp-88, His-144, and Ser-247. The active-site Schiff-base intermediate with substrate; via pyruvic acid; for decarboxylase activity is the Ser-247. Ser-247 is modified (pyruvic acid (Ser); by autocatalysis).

It belongs to the phosphatidylserine decarboxylase family. PSD-B subfamily. Prokaryotic type I sub-subfamily. In terms of assembly, heterodimer of a large membrane-associated beta subunit and a small pyruvoyl-containing alpha subunit. Requires pyruvate as cofactor. In terms of processing, is synthesized initially as an inactive proenzyme. Formation of the active enzyme involves a self-maturation process in which the active site pyruvoyl group is generated from an internal serine residue via an autocatalytic post-translational modification. Two non-identical subunits are generated from the proenzyme in this reaction, and the pyruvate is formed at the N-terminus of the alpha chain, which is derived from the carboxyl end of the proenzyme. The autoendoproteolytic cleavage occurs by a canonical serine protease mechanism, in which the side chain hydroxyl group of the serine supplies its oxygen atom to form the C-terminus of the beta chain, while the remainder of the serine residue undergoes an oxidative deamination to produce ammonia and the pyruvoyl prosthetic group on the alpha chain. During this reaction, the Ser that is part of the protease active site of the proenzyme becomes the pyruvoyl prosthetic group, which constitutes an essential element of the active site of the mature decarboxylase.

Its subcellular location is the cell membrane. It catalyses the reaction a 1,2-diacyl-sn-glycero-3-phospho-L-serine + H(+) = a 1,2-diacyl-sn-glycero-3-phosphoethanolamine + CO2. Its pathway is phospholipid metabolism; phosphatidylethanolamine biosynthesis; phosphatidylethanolamine from CDP-diacylglycerol: step 2/2. Its function is as follows. Catalyzes the formation of phosphatidylethanolamine (PtdEtn) from phosphatidylserine (PtdSer). In Xanthomonas campestris pv. campestris (strain B100), this protein is Phosphatidylserine decarboxylase proenzyme.